A 1188-amino-acid polypeptide reads, in one-letter code: Phospholipid-transporting ATPase IB (1188 aa).

Topologically, residues 1 to 94 are cytoplasmic; sequence MLNGAGLDKA…PRFLYEQIRR (94 aa). Phosphothreonine is present on T45. The helical transmembrane segment at 95 to 115 threads the bilayer; it reads AANAFFLFIALLQQIPDVSPT. Residues 116 to 119 are Extracellular-facing; sequence GRYT. A helical transmembrane segment spans residues 120-140; that stretch reads TLVPLIIILTIAGIKEIVEDF. Over 141-316 the chain is Cytoplasmic; sequence KRHKADNAVN…SNVEKVTNVQ (176 aa). Residues 317–337 traverse the membrane as a helical segment; that stretch reads ILVLFGILLVMALVSSAGALY. Residues 338–364 lie on the Extracellular side of the membrane; it reads WNRSHGEKNWYIKKMDTTSDNFGYNLL. A helical transmembrane segment spans residues 365–385; the sequence is TFIILYNNLIPISLLVTLEVV. Residues 386-887 are Cytoplasmic-facing; the sequence is KYTQALFINW…CILYCFYKNV (502 aa). D428 (4-aspartylphosphate intermediate) is an active-site residue. ATP is bound by residues D428, K429, T430, E528, F569, K592, R625, T705, G706, D707, R795, and K801. Residue D428 participates in Mg(2+) binding. Residue T430 coordinates Mg(2+). D821 contributes to the Mg(2+) binding site. Residues N824 and D825 each contribute to the ATP site. A Mg(2+)-binding site is contributed by D825. The chain crosses the membrane as a helical span at residues 888–908; sequence VLYIIELWFAFVNGFSGQILF. The Extracellular segment spans residues 909 to 910; the sequence is ER. The helical transmembrane segment at 911-931 threads the bilayer; sequence WCIGLYNVIFTALPPFTLGIF. Over 932–959 the chain is Cytoplasmic; that stretch reads ERSCTQESMLRFPQLYKITQNGEGFNTK. A helical transmembrane segment spans residues 960 to 980; that stretch reads VFWGHCINALVHSLILFWFPM. At 981–997 the chain is on the extracellular side; that stretch reads KALEHDTVLTSGHATDY. A helical transmembrane segment spans residues 998–1018; the sequence is LFVGNIVYTYVVVTVCLKAGL. Residues 1019-1028 are Cytoplasmic-facing; the sequence is ETTAWTKFSH. Residues 1029–1049 traverse the membrane as a helical segment; that stretch reads LAVWGSMLTWLVFFGIYSTIW. Topologically, residues 1050-1063 are extracellular; the sequence is PTIPIAPDMRGQAT. Residues 1064-1084 form a helical membrane-spanning segment; it reads MVLSSAHFWLGLFLVPTACLI. Residues 1085–1188 are Cytoplasmic-facing; the sequence is EDVAWRAAKH…DTTKKKSRKK (104 aa). The interval 1162–1188 is disordered; sequence SQEEHGAVSQEEVIRAYDTTKKKSRKK. Residues 1163–1182 show a composition bias toward basic and acidic residues; the sequence is QEEHGAVSQEEVIRAYDTTK.

It belongs to the cation transport ATPase (P-type) (TC 3.A.3) family. Type IV subfamily. In terms of assembly, component of a P4-ATPase flippase complex which consists of a catalytic alpha subunit and an accessory beta subunit. Interacts with TMEM30A to form a flippase complex. It depends on Mg(2+) as a cofactor. As to expression, strongly expressed in the brain, cerebellum, retina and testis.

It is found in the membrane. Its subcellular location is the golgi apparatus membrane. The protein resides in the endosome membrane. It localises to the cell membrane. The protein localises to the photoreceptor outer segment membrane. It is found in the photoreceptor inner segment membrane. The catalysed reaction is ATP + H2O + phospholipidSide 1 = ADP + phosphate + phospholipidSide 2.. The enzyme catalyses a 1,2-diacyl-sn-glycero-3-phospho-L-serine(out) + ATP + H2O = a 1,2-diacyl-sn-glycero-3-phospho-L-serine(in) + ADP + phosphate + H(+). It carries out the reaction a 1,2-diacyl-sn-glycero-3-phosphoethanolamine(in) + ATP + H2O = a 1,2-diacyl-sn-glycero-3-phosphoethanolamine(out) + ADP + phosphate + H(+). In terms of biological role, catalytic component of a P4-ATPase flippase complex which catalyzes the hydrolysis of ATP coupled to the transport of aminophospholipids from the outer to the inner leaflet of various membranes and ensures the maintenance of asymmetric distribution of phospholipids. Able to translocate phosphatidylserine, but not phosphatidylcholine. Phospholipid translocation also seems to be implicated in vesicle formation and in uptake of lipid signaling molecules. Reconstituted to liposomes, the ATP8A2:TMEM30A flippase complex predominantly transports phosphatidylserine (PS) and to a lesser extent phosphatidylethanolamine (PE). Phospholipid translocation is not associated with a countertransport of an inorganic ion or other charged substrate from the cytoplasmic side toward the exoplasm in connection with the phosphorylation from ATP. ATP8A2:TMEM30A may be involved in regulation of neurite outgrowth. Proposed to function in the generation and maintenance of phospholipid asymmetry in photoreceptor disk membranes and neuronal axon membranes. May be involved in vesicle trafficking in neuronal cells. Required for normal visual and auditory function; involved in photoreceptor and inner ear spiral ganglion cell survival. The protein is Phospholipid-transporting ATPase IB of Homo sapiens (Human).